The primary structure comprises 366 residues: Putative neutrophil cytosol factor 1C (366 aa).

The PX domain occupies methionine 1–leucine 101. 2 consecutive SH3 domains span residues isoleucine 132–serine 191 and tyrosine 202–glutamine 261. The interval glutamine 261–valine 366 is disordered. Phosphoserine is present on residues serine 279 and serine 280. A compositionally biased stretch (basic residues) spans histidine 285–arginine 294. Phosphoserine occurs at positions 296, 304, 321, and 324.

It is found in the cytoplasm. Functionally, may be required for activation of the latent NADPH oxidase (necessary for superoxide production). This is Putative neutrophil cytosol factor 1C (NCF1C) from Homo sapiens (Human).